The chain runs to 268 residues: Shikimate dehydrogenase (NADP(+)) (268 aa).

Shikimate is bound by residues 13-15 (SLS) and Thr-60. Lys-64 acts as the Proton acceptor in catalysis. NADP(+) is bound at residue Glu-76. Shikimate-binding residues include Asn-85 and Asp-100. NADP(+) contacts are provided by residues 124 to 128 (GAGGA), 148 to 153 (NRTMAR), and Ile-209. Position 211 (Tyr-211) interacts with shikimate. Gly-232 contributes to the NADP(+) binding site.

It belongs to the shikimate dehydrogenase family. Homodimer.

The enzyme catalyses shikimate + NADP(+) = 3-dehydroshikimate + NADPH + H(+). It functions in the pathway metabolic intermediate biosynthesis; chorismate biosynthesis; chorismate from D-erythrose 4-phosphate and phosphoenolpyruvate: step 4/7. Involved in the biosynthesis of the chorismate, which leads to the biosynthesis of aromatic amino acids. Catalyzes the reversible NADPH linked reduction of 3-dehydroshikimate (DHSA) to yield shikimate (SA). The protein is Shikimate dehydrogenase (NADP(+)) of Staphylococcus aureus (strain USA300).